Here is a 615-residue protein sequence, read N- to C-terminus: Integral inner nuclear membrane protein ima1 (615 aa).

3 helical membrane passes run 192–212, 247–267, and 323–343; these read FVLW…SIVW, IFYF…WYKM, and QIHA…ISCL. The disordered stretch occupies residues 357–387; sequence ILKPRKKRQESTSSVHRIGKESSDRKDGISG. Basic and acidic residues predominate over residues 374–384; that stretch reads IGKESSDRKDG. 2 helical membrane-spanning segments follow: residues 563–583 and 586–606; these read AKLL…GWRL and FTMF…VMKH.

It is found in the nucleus inner membrane. In terms of biological role, inner nuclear membrane protein that specifically binds to heterochromatic regions and promotes the tethering of centromeric DNA to the SUN-KASH complex. Couples centromeres to the nuclear envelope, thus contributing to their association with the microtubule organizing center attachment site and to the positioning of the nucleus at the cell center by microtubules. The protein is Integral inner nuclear membrane protein ima1 (IMA1) of Schizosaccharomyces pombe (strain 972 / ATCC 24843) (Fission yeast).